A 370-amino-acid polypeptide reads, in one-letter code: 1-propanol dehydrogenase PduQ (370 aa).

This sequence belongs to the iron-containing alcohol dehydrogenase family. As to quaternary structure, interacts with PduP, probably via the N-terminus of PduQ. It depends on Fe cation as a cofactor.

Its subcellular location is the bacterial microcompartment. The enzyme catalyses 1-propanol + NAD(+) = propanal + NADH + H(+). The protein operates within polyol metabolism; 1,2-propanediol degradation. Its activity is regulated as follows. Enzyme is oxygen sensitive. In terms of biological role, an iron-dependent alcohol dehydrogenase required for optimal 1,2-propanediol (1,2-PD) degradation. NAD(+) and NADH are regenerated internally within the bacterial microcompartment (BMC) dedicated to 1,2-PD degradation by the PduP and PduQ enzymes, which reduce NAD(+) and oxidize NADH respectively, although there must also be cofactor transport across the BMC. The 1,2-PD-specific bacterial microcompartment (BMC) concentrates low levels of 1,2-PD catabolic enzymes, concentrates volatile reaction intermediates thus enhancing pathway flux and keeps the level of toxic, mutagenic propionaldehyde low. The chain is 1-propanol dehydrogenase PduQ from Salmonella typhimurium (strain LT2 / SGSC1412 / ATCC 700720).